The primary structure comprises 210 residues: Cytochrome c biogenesis ATP-binding export protein CcmA (210 aa).

In terms of domain architecture, ABC transporter spans Leu4–Glu207. Gly36–Thr43 provides a ligand contact to ATP.

This sequence belongs to the ABC transporter superfamily. CcmA exporter (TC 3.A.1.107) family. As to quaternary structure, the complex is composed of two ATP-binding proteins (CcmA) and two transmembrane proteins (CcmB).

It localises to the cell inner membrane. It catalyses the reaction heme b(in) + ATP + H2O = heme b(out) + ADP + phosphate + H(+). In terms of biological role, part of the ABC transporter complex CcmAB involved in the biogenesis of c-type cytochromes; once thought to export heme, this seems not to be the case, but its exact role is uncertain. Responsible for energy coupling to the transport system. The chain is Cytochrome c biogenesis ATP-binding export protein CcmA from Paracoccus denitrificans (strain Pd 1222).